The primary structure comprises 560 residues: Serine/threonine-protein kinase TOS3 (560 aa).

The Protein kinase domain occupies 50–344 (FEILATLGNG…LADIKVHPFM (295 aa)). ATP-binding positions include 56–64 (LGNGQYGKV) and Lys-79. Asp-189 functions as the Proton acceptor in the catalytic mechanism.

Belongs to the protein kinase superfamily. Ser/Thr protein kinase family. In terms of processing, autophosphorylated.

It carries out the reaction L-seryl-[protein] + ATP = O-phospho-L-seryl-[protein] + ADP + H(+). The enzyme catalyses L-threonyl-[protein] + ATP = O-phospho-L-threonyl-[protein] + ADP + H(+). One of the three SNF1 protein kinases (with SAK1 and ELM1) which are required for growth on nonfermentable carbon sources and nonpreferred sugars and for response to environmental stress. Activates SNF1 by phosphorylation of its activation-loop 'Thr-210'. Required for the regulation by SNF1 of the transcription of a large set of genes, the modification the activity of metabolic enzymes, and the control of various nutrient-responsive cellular developmental processes. Also phosphorylates GAL83, MIG1 and SIP2. The protein is Serine/threonine-protein kinase TOS3 (TOS3) of Saccharomyces cerevisiae (strain ATCC 204508 / S288c) (Baker's yeast).